Reading from the N-terminus, the 1593-residue chain is Nischarin (1593 aa).

Residues 1–134 (MAAATLSFGP…GVTAALAEEL (134 aa)) are necessary for binding to phosphoinositide-3-P; not sufficient for targeting to endosomes. Residues 12–122 (REAEPAKEAR…AHFLHFHLYE (111 aa)) form the PX domain. A necessary for homooligomerization and targeting to endosomes region spans residues 121–695 (YEVNGVTAAL…ERLALEWALG (575 aa)). Positions 246–869 (MSVRFSATSM…LVYSDKRMVQ (624 aa)) are interaction with PAK1. LRR repeat units lie at residues 290–311 (ALTT…VKLI), 313–334 (KIEY…QHLY), 335–356 (NLVH…HTKL), 358–379 (NVKT…HKLY), 380–401 (SLVN…KSIG), and 405–426 (CLER…RTKV). Positions 466–480 (SKLSNTEKKAGEDFR) are enriched in basic and acidic residues. A disordered region spans residues 466–499 (SKLSNTEKKAGEDFRLPPAPCIRPGGSPPAAPAS). Over residues 482–496 (PPAPCIRPGGSPPAA) the composition is skewed to pro residues. Phosphoserine is present on residues S543, S545, and S548. Residues 624-694 (IEAANQREEA…EERLALEWAL (71 aa)) adopt a coiled-coil conformation. The segment at 629–687 (QREEAHGEQGEEEEEEEEEEDVAENRYFEMGPPDAEEEEGSGQGEEDEEDEDEEAEEER) is disordered. Composition is skewed to acidic residues over residues 638–650 (GEEE…EEDV) and 662–685 (DAEE…EAEE). Positions 661 to 869 (PDAEEEEGSG…LVYSDKRMVQ (209 aa)) are interaction with LIMK. Residues 709-807 (KVLWCFLIHV…ANLHEFHADL (99 aa)) are interaction with ITGA5. The tract at residues 1016-1185 (NPSAKPRNQP…PAGGPAPAEA (170 aa)) is disordered. Low complexity-rich tracts occupy residues 1038 to 1069 (ETPA…LAPV) and 1081 to 1158 (AEAP…APAP). 10 consecutive repeat copies span residues 1081–1086 (AEAPAA), 1087–1092 (AEAPAA), 1093–1098 (AEAPAA), 1099–1104 (AEAPAA), 1105–1110 (AEAPAA), 1111–1116 (AEAPAA), 1123–1128 (AEAPAA), 1129–1134 (AEAPAA), 1135–1140 (AEAPAA), and 1141–1146 (AEAPAA). Positions 1081–1146 (AEAPAAAEAP…APAAAEAPAA (66 aa)) are 10 X 6 AA tandem repeat of A-E-A-P-A-A. A compositionally biased stretch (pro residues) spans 1159–1179 (NQAPAPARGPAPARGPAPAGG). T1371 is subject to Phosphothreonine. S1373 carries the post-translational modification Phosphoserine.

As to quaternary structure, homooligomer. Interacts with GRB2. Interacts with PIK3R1; probably associates with the PI3-kinase complex. Interacts with IRS4. Found in a complex with ITGA5 and PAK1. Found in a complex with LIMK1 and PAK1. Interacts with ITGA5 (via cytoplasmic domain); this interaction is direct. Interacts with PAK1 (via kinase domain); this interaction is direct and is increased upon activation of PAK1. Interacts with LIMK1 (via PDZ and kinase domain); this interaction is direct. Interacts with LIMK2; this interaction depends on LIMK2 activity. Interacts with RAC1 (activated state). Interacts with STK11; this interaction may increase STK11 activity. As to expression, highly expressed in brain and kidney. Moderately expressed in heart, liver, lung and skeletal muscle. Not detected in spleen and testis.

The protein resides in the cell membrane. It is found in the cytoplasm. The protein localises to the early endosome. Its subcellular location is the recycling endosome. Functionally, acts either as the functional imidazoline-1 receptor (I1R) candidate or as a membrane-associated mediator of the I1R signaling. Binds numerous imidazoline ligands that induces initiation of cell-signaling cascades triggering to cell survival, growth and migration. Its activation by the agonist rilmenidine induces an increase in phosphorylation of mitogen-activated protein kinases MAPK1 and MAPK3 in rostral ventrolateral medulla (RVLM) neurons that exhibited rilmenidine-evoked hypotension. Blocking its activation with efaroxan abolished rilmenidine-induced mitogen-activated protein kinase phosphorylation in RVLM neurons. Acts as a modulator of Rac-regulated signal transduction pathways. Suppresses Rac1-stimulated cell migration by interacting with PAK1 and inhibiting its kinase activity. Also blocks Pak-independent Rac signaling by interacting with RAC1 and inhibiting Rac1-stimulated NF-kB response element and cyclin D1 promoter activation. Also inhibits LIMK1 kinase activity by reducing LIMK1 'Tyr-508' phosphorylation. Inhibits Rac-induced cell migration and invasion in breast and colon epithelial cells. Inhibits lamellipodia formation, when overexpressed. Plays a role in protection against apoptosis. Involved in association with IRS4 in the enhancement of insulin activation of MAPK1 and MAPK3. When overexpressed, induces a redistribution of cell surface ITGA5 integrin to intracellular endosomal structures. In Mus musculus (Mouse), this protein is Nischarin (Nisch).